A 474-amino-acid polypeptide reads, in one-letter code: Trehalose-6-phosphate synthase (474 aa).

A D-glucose 6-phosphate-binding site is contributed by Arg-10. 22-23 (GG) contributes to the UDP-alpha-D-glucose binding site. Residues Tyr-77 and Asp-131 each contribute to the D-glucose 6-phosphate site. Residues Arg-263 and Lys-268 each coordinate UDP-alpha-D-glucose. Residue Arg-301 participates in D-glucose 6-phosphate binding. UDP-alpha-D-glucose-binding positions include Phe-340 and 366 to 370 (LVAKE).

Belongs to the glycosyltransferase 20 family. As to quaternary structure, homotetramer.

The enzyme catalyses D-glucose 6-phosphate + UDP-alpha-D-glucose = alpha,alpha-trehalose 6-phosphate + UDP + H(+). Its pathway is glycan biosynthesis; trehalose biosynthesis. Its function is as follows. Probably involved in the osmoprotection via the biosynthesis of trehalose. Catalyzes the transfer of glucose from UDP-alpha-D-glucose (UDP-Glc) to D-glucose 6-phosphate (Glc-6-P) to form trehalose-6-phosphate. Acts with retention of the anomeric configuration of the UDP-sugar donor. The sequence is that of Trehalose-6-phosphate synthase from Enterobacter sp. (strain 638).